A 430-amino-acid chain; its full sequence is 3-phosphoshikimate 1-carboxyvinyltransferase (430 aa).

K25, S26, and R30 together coordinate 3-phosphoshikimate. K25 serves as a coordination point for phosphoenolpyruvate. Phosphoenolpyruvate-binding residues include G97 and R125. 3-phosphoshikimate contacts are provided by S170, Q172, D318, and K345. Q172 lines the phosphoenolpyruvate pocket. The active-site Proton acceptor is the D318. The phosphoenolpyruvate site is built by R349 and R391.

It belongs to the EPSP synthase family. Monomer.

Its subcellular location is the cytoplasm. It carries out the reaction 3-phosphoshikimate + phosphoenolpyruvate = 5-O-(1-carboxyvinyl)-3-phosphoshikimate + phosphate. Its pathway is metabolic intermediate biosynthesis; chorismate biosynthesis; chorismate from D-erythrose 4-phosphate and phosphoenolpyruvate: step 6/7. In terms of biological role, catalyzes the transfer of the enolpyruvyl moiety of phosphoenolpyruvate (PEP) to the 5-hydroxyl of shikimate-3-phosphate (S3P) to produce enolpyruvyl shikimate-3-phosphate and inorganic phosphate. This chain is 3-phosphoshikimate 1-carboxyvinyltransferase, found in Shouchella clausii (strain KSM-K16) (Alkalihalobacillus clausii).